Consider the following 451-residue polypeptide: UPF0210 protein lin0538 (451 aa).

It belongs to the UPF0210 family. In terms of assembly, homodimer.

The chain is UPF0210 protein lin0538 from Listeria innocua serovar 6a (strain ATCC BAA-680 / CLIP 11262).